The sequence spans 299 residues: Bifunctional protein FolD 2 (299 aa).

It belongs to the tetrahydrofolate dehydrogenase/cyclohydrolase family. As to quaternary structure, homodimer.

The enzyme catalyses (6R)-5,10-methylene-5,6,7,8-tetrahydrofolate + NADP(+) = (6R)-5,10-methenyltetrahydrofolate + NADPH. The catalysed reaction is (6R)-5,10-methenyltetrahydrofolate + H2O = (6R)-10-formyltetrahydrofolate + H(+). It participates in one-carbon metabolism; tetrahydrofolate interconversion. Functionally, catalyzes the oxidation of 5,10-methylenetetrahydrofolate to 5,10-methenyltetrahydrofolate and then the hydrolysis of 5,10-methenyltetrahydrofolate to 10-formyltetrahydrofolate. The sequence is that of Bifunctional protein FolD 2 (FOLD2) from Arabidopsis thaliana (Mouse-ear cress).